The sequence spans 137 residues: Small ribosomal subunit protein uS12 (137 aa).

Residues 1-55 (MPTINQLVRKPRKSKTKQSDSPALNRGFNSKKKQFTNLNSPQKRGVCTRVGTMTP) form a disordered region. Aspartate 102 is subject to 3-methylthioaspartic acid. Residues 118-137 (SGVDGRRQGRSLYGTKKPKN) form a disordered region.

It belongs to the universal ribosomal protein uS12 family. As to quaternary structure, part of the 30S ribosomal subunit. Contacts proteins S8 and S17. May interact with IF1 in the 30S initiation complex.

In terms of biological role, with S4 and S5 plays an important role in translational accuracy. Interacts with and stabilizes bases of the 16S rRNA that are involved in tRNA selection in the A site and with the mRNA backbone. Located at the interface of the 30S and 50S subunits, it traverses the body of the 30S subunit contacting proteins on the other side and probably holding the rRNA structure together. The combined cluster of proteins S8, S12 and S17 appears to hold together the shoulder and platform of the 30S subunit. The chain is Small ribosomal subunit protein uS12 from Staphylococcus epidermidis (strain ATCC 35984 / DSM 28319 / BCRC 17069 / CCUG 31568 / BM 3577 / RP62A).